The chain runs to 57 residues: Protein CgkB (57 aa).

This chain is Protein CgkB (cgkB), found in Pseudoalteromonas carrageenovora (Alteromonas carrageenovora).